The sequence spans 99 residues: MASAKPKKKNPRLASGRKRARQDVKLNAANTSLRSKYRTAVKNVEKAVLAGDKTKASELFAKMQSVVDTIADKGIFHKNKAARDKSRLSAKVKALALAA.

The segment covering 1 to 20 (MASAKPKKKNPRLASGRKRA) has biased composition (basic residues). A disordered region spans residues 1–29 (MASAKPKKKNPRLASGRKRARQDVKLNAA).

The protein belongs to the bacterial ribosomal protein bS20 family.

Binds directly to 16S ribosomal RNA. In Paracidovorax citrulli (strain AAC00-1) (Acidovorax citrulli), this protein is Small ribosomal subunit protein bS20.